The following is a 946-amino-acid chain: Sorting nexin-14 (946 aa).

The next 2 helical transmembrane spans lie at 24-44 and 49-69; these read ICRQ…ASLL and IHIL…YCSL. Residues 130–304 form the PXA domain; that stretch reads SSKVDASLSE…LLIIFIDDSP (175 aa). Positions 336-468 constitute an RGS domain; sequence ELKQIREQQD…CHSDEYFRQL (133 aa). Serine 548 is modified (phosphoserine). The region spanning 570 to 690 is the PX domain; that stretch reads PYVDFFEDPS…DFLSPNGGET (121 aa).

The protein belongs to the sorting nexin family. Widely expressed both in fetal and adult tissues.

It localises to the lysosome membrane. The protein resides in the late endosome membrane. It is found in the cell projection. Its subcellular location is the dendrite. Its function is as follows. Plays a role in maintaining normal neuronal excitability and synaptic transmission. May be involved in several stages of intracellular trafficking. Required for autophagosome clearance, possibly by mediating the fusion of lysosomes with autophagosomes. Binds phosphatidylinositol 3,5-bisphosphate (PtdIns(3,5)P2), a key component of late endosomes/lysosomes. Does not bind phosphatidylinositol 3-phosphate (PtdIns(3P)). This Homo sapiens (Human) protein is Sorting nexin-14 (SNX14).